The sequence spans 423 residues: Ferrochelatase, mitochondrial (423 aa).

Residues 1–29 constitute a mitochondrion transit peptide; sequence MISRKIISTINSKTFYNKSLSYCTVNNNK. Cys-173 contributes to the [2Fe-2S] cluster binding site. Active-site residues include His-207 and Asp-380. 3 residues coordinate [2Fe-2S] cluster: Cys-401, Cys-404, and Cys-411.

The protein belongs to the ferrochelatase family. As to quaternary structure, monomer. [2Fe-2S] cluster serves as cofactor.

It is found in the mitochondrion inner membrane. The enzyme catalyses heme b + 2 H(+) = protoporphyrin IX + Fe(2+). It participates in porphyrin-containing compound metabolism; protoheme biosynthesis; protoheme from protoporphyrin-IX: step 1/1. Functionally, catalyzes the ferrous insertion into protoporphyrin IX. In Dictyostelium discoideum (Social amoeba), this protein is Ferrochelatase, mitochondrial (hemH).